We begin with the raw amino-acid sequence, 205 residues long: Inosine triphosphate pyrophosphatase (205 aa).

20-25 (TGNAKK) contributes to the ITP binding site. E48 lines the Mg(2+) pocket. ITP contacts are provided by residues K60, 76 to 77 (DT), K93, 152 to 155 (FGWD), K175, and 180 to 181 (HR).

Belongs to the HAM1 NTPase family. In terms of assembly, homodimer. Requires Mg(2+) as cofactor. Mn(2+) serves as cofactor.

It is found in the cytoplasm. It carries out the reaction ITP + H2O = IMP + diphosphate + H(+). The catalysed reaction is dITP + H2O = dIMP + diphosphate + H(+). The enzyme catalyses XTP + H2O = XMP + diphosphate + H(+). Its function is as follows. Pyrophosphatase that hydrolyzes non-canonical purine nucleotides such as inosine triphosphate (ITP), deoxyinosine triphosphate (dITP) or xanthosine 5'-triphosphate (XTP) to their respective monophosphate derivatives. The enzyme does not distinguish between the deoxy- and ribose forms. Probably excludes non-canonical purines from RNA and DNA precursor pools, thus preventing their incorporation into RNA and DNA and avoiding chromosomal lesions. This is Inosine triphosphate pyrophosphatase from Oryza sativa subsp. japonica (Rice).